The sequence spans 358 residues: Aromatic amino acid aminotransferase (358 aa).

An N6-(pyridoxal phosphate)lysine modification is found at lysine 214.

This sequence belongs to the class-II pyridoxal-phosphate-dependent aminotransferase family. As to quaternary structure, homodimer. It depends on pyridoxal 5'-phosphate as a cofactor.

The enzyme catalyses an aromatic L-alpha-amino acid + 2-oxoglutarate = an aromatic oxo-acid + L-glutamate. In terms of biological role, aminotransferase that catalyzes the conversion of aromatic amino acids and 2-oxoglutarate into corresponding aromatic oxo acids and L-glutamate. The sequence is that of Aromatic amino acid aminotransferase from Rhodococcus opacus (strain B4).